The chain runs to 209 residues: MKKSTLLFSLMAMALSGCNSVLNAPIEVKKLVYQIEHTDPAWQQHLKQLAEIKNYEVKGQFGYISPTERFSAHFDWQYKTPIDFTLALSSNLSTKLLKLQRSHQGLTVSDSEGYSRTEADIHALMQEIIGVSFPIDQFAYWVKGQPAQEGNYIVNEKRQLSQFSYPINQQIWQARYVEYHENRVPYLPKLIVLENGQQTLKIRLDHWNY.

The signal sequence occupies residues 1–17; the sequence is MKKSTLLFSLMAMALSG. A lipid anchor (N-palmitoyl cysteine) is attached at C18. C18 carries S-diacylglycerol cysteine lipidation.

It belongs to the LolB family. In terms of assembly, monomer.

The protein localises to the cell outer membrane. Plays a critical role in the incorporation of lipoproteins in the outer membrane after they are released by the LolA protein. This is Outer-membrane lipoprotein LolB from Haemophilus ducreyi (strain 35000HP / ATCC 700724).